The primary structure comprises 248 residues: Peptidyl-prolyl cis-trans isomerase, chloroplastic (248 aa).

One can recognise a PPIase cyclophilin-type domain in the interval Phe-85–Glu-243. The interval Gln-223–Gly-248 is disordered.

The protein belongs to the cyclophilin-type PPIase family. As to expression, highly expressed in leaf.

Its subcellular location is the plastid. It localises to the chloroplast stroma. The enzyme catalyses [protein]-peptidylproline (omega=180) = [protein]-peptidylproline (omega=0). With respect to regulation, binds cyclosporin A (CsA). CsA mediates some of its effects via an inhibitory action on PPIase. Its function is as follows. PPIases accelerate the folding of proteins. It catalyzes the cis-trans isomerization of proline imidic peptide bonds in oligopeptides. The polypeptide is Peptidyl-prolyl cis-trans isomerase, chloroplastic (Vicia faba (Broad bean)).